The sequence spans 103 residues: Small ribosomal subunit protein uS10 (103 aa).

Belongs to the universal ribosomal protein uS10 family. In terms of assembly, part of the 30S ribosomal subunit.

Involved in the binding of tRNA to the ribosomes. The polypeptide is Small ribosomal subunit protein uS10 (Chromobacterium violaceum (strain ATCC 12472 / DSM 30191 / JCM 1249 / CCUG 213 / NBRC 12614 / NCIMB 9131 / NCTC 9757 / MK)).